Reading from the N-terminus, the 330-residue chain is Ubiquinone biosynthesis protein COQ4, mitochondrial (330 aa).

The N-terminal 31 residues, 1–31, are a transit peptide targeting the mitochondrion; that stretch reads MLQSTKVTKSVLTNVLRVEQRRGFLLSGAAV. 4 residues coordinate Zn(2+): His-212, Asp-213, His-216, and Glu-228.

Belongs to the COQ4 family. Component of a multi-subunit COQ enzyme complex, composed of at least COQ3, COQ4, COQ5, COQ6, COQ7 and COQ9. The cofactor is Zn(2+).

Its subcellular location is the mitochondrion inner membrane. It carries out the reaction a 4-hydroxy-3-methoxy-5-(all-trans-polyprenyl)benzoate + H(+) = a 2-methoxy-6-(all-trans-polyprenyl)phenol + CO2. It functions in the pathway cofactor biosynthesis; ubiquinone biosynthesis. Its function is as follows. Lyase that catalyzes the C1-decarboxylation of 4-hydroxy-3-methoxy-5-(all-trans-polyprenyl)benzoic acid into 2-methoxy-6-(all-trans-polyprenyl)phenol during ubiquinone biosynthesis. The protein is Ubiquinone biosynthesis protein COQ4, mitochondrial of Candida glabrata (strain ATCC 2001 / BCRC 20586 / JCM 3761 / NBRC 0622 / NRRL Y-65 / CBS 138) (Yeast).